Reading from the N-terminus, the 1248-residue chain is Period circadian protein homolog 2 (1248 aa).

The segment at 1–57 (MNGYVEFSPSPTKESVEPQPSQAVLQEDVDMSSGSSGHENCSMGRDSQGSDCDDNGK) is disordered. Polar residues-rich tracts occupy residues 9–24 (PSPTKESVEPQPSQAV) and 32–50 (SSGSSGHENCSMGRDSQGS). The short motif at 105–114 (LIRTLRELKV) is the Nuclear export signal 1 element. A PAS 1 domain is found at 175 to 242 (ITSEYIVKNA…FHSYTTPYKL (68 aa)). The LXXLL signature appears at 302-306 (LCCLL). The PAS 2 domain occupies 315–381 (YEAPRIPPEK…MLAIHKKILQ (67 aa)). The PAC domain occupies 389–432 (YSPIRFRARNGEYITLDTSWSSFINPWSRKISFIIGRHKVRVGP). Residues 456 to 465 (LTEQIHRLLM) carry the Nuclear export signal 2 motif. 2 disordered regions span residues 467–563 (PVPH…SLPK) and 619–638 (VSPGLHAEEAAPPPSKVSSH). The interval 474–478 (SGYGS) is important for protein stability. The CSNK1E binding domain stretch occupies residues 506-706 (RKSGISKNGS…GAPGGLSQEK (201 aa)). Residues 510–521 (ISKNGSKTQTRS) show a composition bias toward polar residues. Phosphoserine is present on residues Ser-521, Ser-524, Ser-527, and Ser-540. Residues 523-534 (FSHESGEQKEIA) show a composition bias toward basic and acidic residues. Phosphoserine occurs at positions 656, 690, 694, 703, and 755. Disordered stretches follow at residues 675-708 (DKKPQPELETVEDAVSGPESLDGAPGGLSQEKGP) and 751-829 (RAQA…PSAP). Positions 773-789 (KKTGKNRKLKSKRVKTR) match the Nuclear localization signal motif. The span at 774-787 (KTGKNRKLKSKRVK) shows a compositional bias: basic residues. Residues 816–827 (SPSDTSQSSCPS) show a composition bias toward low complexity. Residues 873–1058 (DFAVQPLPLA…DLCSATGSAL (186 aa)) are interaction with PPARG. Phosphoserine is present on Ser-930. Positions 950-971 (TPPAATVTSGRASPPLFQSRGS) are disordered. Position 955 is a phosphothreonine (Thr-955). Ser-962 carries the post-translational modification Phosphoserine. A Nuclear export signal 3 motif is present at residues 974–981 (LQLNLLQL). Positions 984–1035 (APEGSTGAAGTSGTTGTAAAGLDCTPGTSRDRQPKAPSTCKEPSDTQNSDAL) are disordered. The span at 987–1004 (GSTGAAGTSGTTGTAAAG) shows a compositional bias: low complexity. An LXXLL motif is present at residues 1042–1046 (LNLLL). Residues 1057-1080 (ALSGSGASATSDSLGSGSLGCDAS) are compositionally biased toward low complexity. The interval 1057–1113 (ALSGSGASATSDSLGSGSLGCDASRSGAGSSDTSHTSKYFGSIDSSENNHKAKVSTD) is disordered. A compositionally biased stretch (polar residues) spans 1083 to 1102 (GAGSSDTSHTSKYFGSIDSS). Basic and acidic residues predominate over residues 1103–1112 (ENNHKAKVST). At Ser-1117 the chain carries Phosphoserine. Residues 1148 to 1248 (SRDLESVLRE…LTGPRIEAQT (101 aa)) are CRY binding domain. The segment at 1215 to 1248 (PYEEDSPSPGLCDTSEAKEEEGEQLTGPRIEAQT) is disordered.

As to quaternary structure, homodimer. Component of the circadian core oscillator, which includes the CRY proteins, CLOCK or NPAS2, BMAL1 or BMAL2, CSNK1D and/or CSNK1E, TIMELESS, and the PER proteins. Interacts with CLOCK-BMAL1 (off DNA). Interacts with BMAL2. Interacts directly with PER1 and PER3, and through a C-terminal domain, with CRY1 and CRY2. Interacts (via PAS 2 domain) with TIMELESS. Interacts with NFIL3. Different large complexes have been identified with different repressive functions. The core of PER complexes is composed of at least PER1, PER2, PER3, CRY1, CRY2, CSNK1D and/or CSNK1E. The large PER complex involved in the repression of transcriptional termination is composed of at least PER2, CDK9, DDX5, DHX9, NCBP1 and POLR2A (active). The large PER complex involved in the histone deacetylation is composed of at least HDAC1, PER2, SFPQ and SIN3A. The large PER complex involved in the histone methylation is composed of at least PER2, CBX3, TRIM28, SUV39H1 and/or SUV39H2; CBX3 mediates the formation of the complex. Interacts with SETX; the interaction inhibits termination of circadian target genes. Interacts with the nuclear receptors HNF4A, NR1D1, NR4A2, RORA, PPARA, PPARG and THRA; the interaction with at least PPARG is ligand dependent. Interacts with PML. Interacts (phosphorylated) with BTRC and FBXW11; the interactions trigger proteasomal degradation. Interacts with NONO and SFPQ. Interacts with PRKCDBP. Interacts with MAGEL2. Interacts with MAP1LC3B. Interacts with HNF4A. Post-translationally, acetylated. Deacetylated by SIRT1, resulting in decreased protein stability. Deacetylated by SIRT6, preventing its degradation by the proteasome, resulting in increased protein stability. Phosphorylated by CSNK1E and CSNK1D. Phosphorylation results in PER2 protein degradation. May be dephosphorylated by PP1. In terms of processing, ubiquitinated, leading to its proteasomal degradation. Ubiquitination may be inhibited by CRY1. In terms of tissue distribution, expressed in the brain, mainly in the suprachiasmatic nucleus (SCN). Expression also found in the harderian gland, lung, eye, intestine, liver and skeletal muscle.

The protein localises to the nucleus. It localises to the cytoplasm. It is found in the perinuclear region. In terms of biological role, transcriptional repressor which forms a core component of the circadian clock. The circadian clock, an internal time-keeping system, regulates various physiological processes through the generation of approximately 24 hour circadian rhythms in gene expression, which are translated into rhythms in metabolism and behavior. It is derived from the Latin roots 'circa' (about) and 'diem' (day) and acts as an important regulator of a wide array of physiological functions including metabolism, sleep, body temperature, blood pressure, endocrine, immune, cardiovascular, and renal function. Consists of two major components: the central clock, residing in the suprachiasmatic nucleus (SCN) of the brain, and the peripheral clocks that are present in nearly every tissue and organ system. Both the central and peripheral clocks can be reset by environmental cues, also known as Zeitgebers (German for 'timegivers'). The predominant Zeitgeber for the central clock is light, which is sensed by retina and signals directly to the SCN. The central clock entrains the peripheral clocks through neuronal and hormonal signals, body temperature and feeding-related cues, aligning all clocks with the external light/dark cycle. Circadian rhythms allow an organism to achieve temporal homeostasis with its environment at the molecular level by regulating gene expression to create a peak of protein expression once every 24 hours to control when a particular physiological process is most active with respect to the solar day. Transcription and translation of core clock components (CLOCK, NPAS2, BMAL1, BMAL2, PER1, PER2, PER3, CRY1 and CRY2) plays a critical role in rhythm generation, whereas delays imposed by post-translational modifications (PTMs) are important for determining the period (tau) of the rhythms (tau refers to the period of a rhythm and is the length, in time, of one complete cycle). A diurnal rhythm is synchronized with the day/night cycle, while the ultradian and infradian rhythms have a period shorter and longer than 24 hours, respectively. Disruptions in the circadian rhythms contribute to the pathology of cardiovascular diseases, cancer, metabolic syndrome and aging. A transcription/translation feedback loop (TTFL) forms the core of the molecular circadian clock mechanism. Transcription factors, CLOCK or NPAS2 and BMAL1 or BMAL2, form the positive limb of the feedback loop, act in the form of a heterodimer and activate the transcription of core clock genes and clock-controlled genes (involved in key metabolic processes), harboring E-box elements (5'-CACGTG-3') within their promoters. The core clock genes: PER1/2/3 and CRY1/2 which are transcriptional repressors form the negative limb of the feedback loop and interact with the CLOCK|NPAS2-BMAL1|BMAL2 heterodimer inhibiting its activity and thereby negatively regulating their own expression. This heterodimer also activates nuclear receptors NR1D1/2 and RORA/B/G, which form a second feedback loop and which activate and repress BMAL1 transcription, respectively. PER1 and PER2 proteins transport CRY1 and CRY2 into the nucleus with appropriate circadian timing, but also contribute directly to repression of clock-controlled target genes through interaction with several classes of RNA-binding proteins, helicases and others transcriptional repressors. PER appears to regulate circadian control of transcription by at least three different modes. First, interacts directly with the CLOCK-BMAL1 at the tail end of the nascent transcript peak to recruit complexes containing the SIN3-HDAC that remodel chromatin to repress transcription. Second, brings H3K9 methyltransferases such as SUV39H1 and SUV39H2 to the E-box elements of the circadian target genes, like PER2 itself or PER1. The recruitment of each repressive modifier to the DNA seems to be very precisely temporally orchestrated by the large PER complex, the deacetylases acting before than the methyltransferases. Additionally, large PER complexes are also recruited to the target genes 3' termination site through interactions with RNA-binding proteins and helicases that may play a role in transcription termination to regulate transcription independently of CLOCK-BMAL1 interactions. Recruitment of large PER complexes to the elongating polymerase at PER and CRY termination sites inhibited SETX action, impeding RNA polymerase II release and thereby repressing transcriptional reinitiation. May propagate clock information to metabolic pathways via the interaction with nuclear receptors. Coactivator of PPARA and corepressor of NR1D1, binds rhythmically at the promoter of nuclear receptors target genes like BMAL1 or G6PC1. Directly and specifically represses PPARG proadipogenic activity by blocking PPARG recruitment to target promoters and thereby transcriptional activation. Required for fatty acid and lipid metabolism, is involved as well in the regulation of circulating insulin levels. Plays an important role in the maintenance of cardiovascular functions through the regulation of NO and vasodilatatory prostaglandins production in aortas. Controls circadian glutamate uptake in synaptic vesicles through the regulation of VGLUT1 expression. May also be involved in the regulation of inflammatory processes. Represses the CLOCK-BMAL1 induced transcription of BHLHE40/DEC1 and ATF4. Negatively regulates the formation of the TIMELESS-CRY1 complex by competing with TIMELESS for binding to CRY1. This is Period circadian protein homolog 2 (PER2) from Spalax judaei (Judean Mountains blind mole rat).